Consider the following 192-residue polypeptide: MLGLRLIVGLGNPGSEYIKTRHNAGFRFVDGLVQREGQCWALESKLFAYVARVFIAGQWVWLLRPVTFMNLSGKSICAGLNFWKIKPEQMLVAHDELDFPPGAVRLKFDGGHGGQNGLRDITKLLGHGRFHRLRVGIGHPGHKDRVVSWVLGCPTCDENIAIDAALERASVVLPLAVAGDFDGAMKKLHTVV.

Residue Y17 coordinates tRNA. The Proton acceptor role is filled by H22. Positions 68, 70, and 116 each coordinate tRNA.

It belongs to the PTH family. In terms of assembly, monomer.

The protein localises to the cytoplasm. The enzyme catalyses an N-acyl-L-alpha-aminoacyl-tRNA + H2O = an N-acyl-L-amino acid + a tRNA + H(+). Its function is as follows. Hydrolyzes ribosome-free peptidyl-tRNAs (with 1 or more amino acids incorporated), which drop off the ribosome during protein synthesis, or as a result of ribosome stalling. Functionally, catalyzes the release of premature peptidyl moieties from peptidyl-tRNA molecules trapped in stalled 50S ribosomal subunits, and thus maintains levels of free tRNAs and 50S ribosomes. This Xylella fastidiosa (strain Temecula1 / ATCC 700964) protein is Peptidyl-tRNA hydrolase.